Reading from the N-terminus, the 245-residue chain is Chymotrypsinogen A (245 aa).

Intrachain disulfides connect C1–C122, C42–C58, C136–C201, C168–C182, and C191–C220. The propeptide occupies 14 to 15 (SR). Positions 16 to 243 (IVNGEEAVPG…LVNWVQQTLA (228 aa)) constitute a Peptidase S1 domain. Active-site charge relay system residues include H57 and D102. Residues 147 to 148 (TN) constitute a propeptide that is removed on maturation. S195 acts as the Charge relay system in catalysis.

This sequence belongs to the peptidase S1 family.

The protein resides in the secreted. It is found in the extracellular space. It carries out the reaction Preferential cleavage: Tyr-|-Xaa, Trp-|-Xaa, Phe-|-Xaa, Leu-|-Xaa.. This chain is Chymotrypsinogen A, found in Bos taurus (Bovine).